The chain runs to 506 residues: NAD(P)H-quinone oxidoreductase subunit 2 (506 aa).

The next 13 helical transmembrane spans lie at A14–A34, W42–W62, L79–W99, P108–G128, L132–Y152, L167–L187, F206–V226, P240–I260, L276–Q296, M302–T322, V330–F350, L374–G394, and L409–I429.

Belongs to the complex I subunit 2 family. In terms of assembly, NDH-1 can be composed of about 15 different subunits; different subcomplexes with different compositions have been identified which probably have different functions.

The protein resides in the cellular thylakoid membrane. The enzyme catalyses a plastoquinone + NADH + (n+1) H(+)(in) = a plastoquinol + NAD(+) + n H(+)(out). It catalyses the reaction a plastoquinone + NADPH + (n+1) H(+)(in) = a plastoquinol + NADP(+) + n H(+)(out). NDH-1 shuttles electrons from an unknown electron donor, via FMN and iron-sulfur (Fe-S) centers, to quinones in the respiratory and/or the photosynthetic chain. The immediate electron acceptor for the enzyme in this species is believed to be plastoquinone. Couples the redox reaction to proton translocation, and thus conserves the redox energy in a proton gradient. Cyanobacterial NDH-1 also plays a role in inorganic carbon-concentration. The protein is NAD(P)H-quinone oxidoreductase subunit 2 of Prochlorococcus marinus (strain MIT 9301).